The sequence spans 337 residues: S-adenosylmethionine:tRNA ribosyltransferase-isomerase (337 aa).

The protein belongs to the QueA family. In terms of assembly, monomer.

It is found in the cytoplasm. The enzyme catalyses 7-aminomethyl-7-carbaguanosine(34) in tRNA + S-adenosyl-L-methionine = epoxyqueuosine(34) in tRNA + adenine + L-methionine + 2 H(+). It participates in tRNA modification; tRNA-queuosine biosynthesis. Transfers and isomerizes the ribose moiety from AdoMet to the 7-aminomethyl group of 7-deazaguanine (preQ1-tRNA) to give epoxyqueuosine (oQ-tRNA). The sequence is that of S-adenosylmethionine:tRNA ribosyltransferase-isomerase from Legionella pneumophila (strain Corby).